The primary structure comprises 500 residues: Cysteine-rich secretory protein LCCL domain-containing 1 (500 aa).

The signal sequence occupies residues 1–23 (MMCKAQEWLRVTALLFVARAVPA). The SCP domain occupies 66–206 (LDLHNKLRSQ…PKAVYLVCNY (141 aa)). The disordered stretch occupies residues 258 to 281 (EIERQQSQVHDTHVRTRSDDSDRN). LCCL domains follow at residues 289–384 (MSQI…ANSF) and 390–492 (TVQA…TGGK). Disulfide bonds link cysteine 295/cysteine 313, cysteine 317/cysteine 337, cysteine 396/cysteine 418, and cysteine 422/cysteine 445.

This sequence belongs to the CRISP family.

The protein localises to the secreted. The sequence is that of Cysteine-rich secretory protein LCCL domain-containing 1 (Crispld1) from Mus musculus (Mouse).